The sequence spans 311 residues: Aspartate carbamoyltransferase catalytic subunit (311 aa).

2 residues coordinate carbamoyl phosphate: Arg-59 and Thr-60. Lys-87 serves as a coordination point for L-aspartate. The carbamoyl phosphate site is built by Arg-109, His-139, and Gln-142. L-aspartate-binding residues include Arg-172 and Arg-224. Residues Ala-265 and Pro-266 each coordinate carbamoyl phosphate.

This sequence belongs to the aspartate/ornithine carbamoyltransferase superfamily. ATCase family. In terms of assembly, heterododecamer (2C3:3R2) of six catalytic PyrB chains organized as two trimers (C3), and six regulatory PyrI chains organized as three dimers (R2).

It carries out the reaction carbamoyl phosphate + L-aspartate = N-carbamoyl-L-aspartate + phosphate + H(+). It functions in the pathway pyrimidine metabolism; UMP biosynthesis via de novo pathway; (S)-dihydroorotate from bicarbonate: step 2/3. Functionally, catalyzes the condensation of carbamoyl phosphate and aspartate to form carbamoyl aspartate and inorganic phosphate, the committed step in the de novo pyrimidine nucleotide biosynthesis pathway. The chain is Aspartate carbamoyltransferase catalytic subunit from Streptococcus pyogenes serotype M12 (strain MGAS2096).